The chain runs to 389 residues: Diaminopimelate decarboxylase (389 aa).

Residue K58 is modified to N6-(pyridoxal phosphate)lysine. Residues G233 and E271 to R274 each bind pyridoxal 5'-phosphate. The substrate site is built by R274, R310, Y314, E342, and Y370. Residue Y370 participates in pyridoxal 5'-phosphate binding.

This sequence belongs to the Orn/Lys/Arg decarboxylase class-II family. LysA subfamily. Homodimer. It depends on pyridoxal 5'-phosphate as a cofactor.

It catalyses the reaction meso-2,6-diaminopimelate + H(+) = L-lysine + CO2. The protein operates within amino-acid biosynthesis; L-lysine biosynthesis via DAP pathway; L-lysine from DL-2,6-diaminopimelate: step 1/1. Specifically catalyzes the decarboxylation of meso-diaminopimelate (meso-DAP) to L-lysine. This Francisella tularensis subsp. holarctica (strain LVS) protein is Diaminopimelate decarboxylase.